A 77-amino-acid polypeptide reads, in one-letter code: Acyl carrier protein (77 aa).

A Carrier domain is found at 2–77 (AEVFDRVKEI…DAVDYINSKA (76 aa)). An O-(pantetheine 4'-phosphoryl)serine modification is found at S37.

Belongs to the acyl carrier protein (ACP) family. Post-translationally, 4'-phosphopantetheine is transferred from CoA to a specific serine of apo-ACP by AcpS. This modification is essential for activity because fatty acids are bound in thioester linkage to the sulfhydryl of the prosthetic group.

The protein resides in the cytoplasm. It functions in the pathway lipid metabolism; fatty acid biosynthesis. In terms of biological role, carrier of the growing fatty acid chain in fatty acid biosynthesis. The sequence is that of Acyl carrier protein from Oceanobacillus iheyensis (strain DSM 14371 / CIP 107618 / JCM 11309 / KCTC 3954 / HTE831).